We begin with the raw amino-acid sequence, 304 residues long: Elongation factor Ts (304 aa).

Positions 80-83 (TDFV) are involved in Mg(2+) ion dislocation from EF-Tu.

Belongs to the EF-Ts family.

It localises to the cytoplasm. In terms of biological role, associates with the EF-Tu.GDP complex and induces the exchange of GDP to GTP. It remains bound to the aminoacyl-tRNA.EF-Tu.GTP complex up to the GTP hydrolysis stage on the ribosome. The chain is Elongation factor Ts from Clostridium tetani (strain Massachusetts / E88).